The following is a 427-amino-acid chain: Trigger factor (427 aa).

Positions 163-248 (GDTVVIDFVG…IHEVKEKEVP (86 aa)) constitute a PPIase FKBP-type domain.

The protein belongs to the FKBP-type PPIase family. Tig subfamily.

The protein localises to the cytoplasm. It carries out the reaction [protein]-peptidylproline (omega=180) = [protein]-peptidylproline (omega=0). Involved in protein export. Acts as a chaperone by maintaining the newly synthesized protein in an open conformation. Functions as a peptidyl-prolyl cis-trans isomerase. This Streptococcus sanguinis (strain SK36) protein is Trigger factor.